Reading from the N-terminus, the 247-residue chain is Protein-L-isoaspartate O-methyltransferase 2 (247 aa).

Residue Ser-97 is part of the active site.

Belongs to the methyltransferase superfamily. L-isoaspartyl/D-aspartyl protein methyltransferase family.

It localises to the cytoplasm. It catalyses the reaction [protein]-L-isoaspartate + S-adenosyl-L-methionine = [protein]-L-isoaspartate alpha-methyl ester + S-adenosyl-L-homocysteine. Functionally, catalyzes the methyl esterification of L-isoaspartyl residues in peptides and proteins that result from spontaneous decomposition of normal L-aspartyl and L-asparaginyl residues. It plays a role in the repair and/or degradation of damaged proteins. The chain is Protein-L-isoaspartate O-methyltransferase 2 from Syntrophobacter fumaroxidans (strain DSM 10017 / MPOB).